Reading from the N-terminus, the 564-residue chain is Copine-8 (564 aa).

C2 domains are found at residues 1-133 (MDSR…RLEK) and 142-265 (KCGT…FNVY). Ca(2+)-binding residues include D39, D45, D99, D101, S104, K109, D111, D173, D179, D235, D237, and D243. Residue S260 is modified to Phosphoserine. Positions 309 to 510 (NFTVAIDFTA…VQFVPFRDYI (202 aa)) constitute a VWFA domain.

Belongs to the copine family. It depends on Ca(2+) as a cofactor.

Functionally, probable calcium-dependent phospholipid-binding protein that may play a role in calcium-mediated intracellular processes. The sequence is that of Copine-8 from Homo sapiens (Human).